Consider the following 302-residue polypeptide: Nucleoside kinase (302 aa).

Substrate is bound by residues D17, Q33, G43, and N47. Residue Q109 participates in ATP binding. Substrate contacts are provided by residues 111–113 (TFF) and Q163. ATP contacts are provided by residues N186 and 214 to 219 (TKGSKG). D247 contributes to the substrate binding site. D247 serves as the catalytic Proton acceptor.

As to quaternary structure, homodimer. It depends on Mg(2+) as a cofactor. Mn(2+) is required as a cofactor.

The catalysed reaction is cytidine + ATP = CMP + ADP + H(+). The enzyme catalyses guanosine + ATP = GMP + ADP + H(+). It carries out the reaction inosine + ATP = IMP + ADP + H(+). Catalyzes the phosphorylation of a wide range of nucleosides to yield nucleoside monophosphates. Shows the highest activity for inosine, guanosine and cytidine, but very poor kinase activity with adenosine, thymidine, uridine and xanthosine. ATP is the best phosphate donor, but can also use ITP and GTP. Shows extremely low activity with fructose-6-phosphate. The chain is Nucleoside kinase from Methanocaldococcus jannaschii (strain ATCC 43067 / DSM 2661 / JAL-1 / JCM 10045 / NBRC 100440) (Methanococcus jannaschii).